A 270-amino-acid polypeptide reads, in one-letter code: Transmembrane protein 176B (270 aa).

Helical transmembrane passes span 65–85, 95–115, 127–147, and 209–229; these read LALG…GVCL, ASGC…GAIV, ISSL…VLCV, and LFLA…GVGL. Residues S236, S245, S254, and S258 each carry the phosphoserine modification. The disordered stretch occupies residues 237–270; that stretch reads SQPLNEEGSEKRLLGENSVPPSPSREQTSTAIVL. Residues 260–270 show a composition bias toward polar residues; the sequence is SREQTSTAIVL.

The protein belongs to the TMEM176 family. As to expression, expressed in lung and dermal fibroblasts.

The protein resides in the nucleus membrane. May play a role in the process of maturation of dendritic cells. Required for the development of cerebellar granule cells. The sequence is that of Transmembrane protein 176B (TMEM176B) from Homo sapiens (Human).